The following is a 141-amino-acid chain: N,N-dimethylformamidase alpha subunit (141 aa).

Heterotetramer of two DmfA1 (alpha) and two DmfA2 (beta) subunits.

The enzyme catalyses N,N-dimethylformamide + H2O = dimethylamine + formate. In terms of biological role, hydrolyzes N,N-dimethylformamide, and to a lesser extent N,N-dimethylacetamide and N,N-diethylacetamide. Has no activity against the substituted amides N-methylformamide, N-ethylformamide, N-ethylformamide and N-methylacetamide or the unsubstituted amides formamide, nicotinamide, acetoamide, benzamide, acetamide and acrylamide. This Paracoccus aminophilus protein is N,N-dimethylformamidase alpha subunit.